Consider the following 517-residue polypeptide: Acetylcholine receptor subunit delta (517 aa).

Residues 1–21 (MEGPVLTLGLLAALAVCGSWG) form the signal peptide. The Extracellular segment spans residues 22–245 (LNEEERLIRH…ITFYLIIRRK (224 aa)). Residues asparagine 97 and asparagine 164 are each glycosylated (N-linked (GlcNAc...) asparagine). A disulfide bridge connects residues cysteine 151 and cysteine 165. 3 consecutive transmembrane segments (helical) span residues 246 to 270 (PLFYIINILVPCVLISFMVNLVFYL), 278 to 299 (TSVAISVLLAQSVFLLLISKRL), and 312 to 333 (FLLFGMVLVTMVVVICVIVLNI). Residues 334–471 (HFRTPSTHVL…WNRVARTVDR (138 aa)) are Cytoplasmic-facing. At tyrosine 390 the chain carries Phosphotyrosine; by Tyr-kinases. A helical membrane pass occupies residues 472-490 (LCLFVVTPVMVVGTAWIFL).

It belongs to the ligand-gated ion channel (TC 1.A.9) family. Acetylcholine receptor (TC 1.A.9.1) subfamily. Delta/CHRND sub-subfamily. As to quaternary structure, pentamer of two alpha chains, and one each of the beta, delta, and gamma (in immature muscle) or epsilon (in mature muscle) chains. The muscle heteropentamer composed of alpha-1, beta-1, delta, epsilon subunits interacts with the alpha-conotoxin ImII.

Its subcellular location is the postsynaptic cell membrane. It is found in the cell membrane. It catalyses the reaction K(+)(in) = K(+)(out). The catalysed reaction is Na(+)(in) = Na(+)(out). Its function is as follows. After binding acetylcholine, the AChR responds by an extensive change in conformation that affects all subunits and leads to opening of an ion-conducting channel across the plasma membrane. This Homo sapiens (Human) protein is Acetylcholine receptor subunit delta.